The primary structure comprises 274 residues: Formamidopyrimidine-DNA glycosylase (274 aa).

Catalysis depends on proline 2, which acts as the Schiff-base intermediate with DNA. The active-site Proton donor is the glutamate 3. Lysine 58 functions as the Proton donor; for beta-elimination activity in the catalytic mechanism. Histidine 91, arginine 110, and lysine 152 together coordinate DNA. The FPG-type zinc finger occupies 237 to 271 (KVYGRKNLPCLVCENKIETVVIAGRHSAFCPHCQP). The Proton donor; for delta-elimination activity role is filled by arginine 261.

It belongs to the FPG family. Monomer. The cofactor is Zn(2+).

The catalysed reaction is Hydrolysis of DNA containing ring-opened 7-methylguanine residues, releasing 2,6-diamino-4-hydroxy-5-(N-methyl)formamidopyrimidine.. The enzyme catalyses 2'-deoxyribonucleotide-(2'-deoxyribose 5'-phosphate)-2'-deoxyribonucleotide-DNA = a 3'-end 2'-deoxyribonucleotide-(2,3-dehydro-2,3-deoxyribose 5'-phosphate)-DNA + a 5'-end 5'-phospho-2'-deoxyribonucleoside-DNA + H(+). Involved in base excision repair of DNA damaged by oxidation or by mutagenic agents. Acts as a DNA glycosylase that recognizes and removes damaged bases. Has a preference for oxidized purines, such as 7,8-dihydro-8-oxoguanine (8-oxoG). Has AP (apurinic/apyrimidinic) lyase activity and introduces nicks in the DNA strand. Cleaves the DNA backbone by beta-delta elimination to generate a single-strand break at the site of the removed base with both 3'- and 5'-phosphates. This chain is Formamidopyrimidine-DNA glycosylase, found in Legionella pneumophila (strain Paris).